Reading from the N-terminus, the 701-residue chain is Elongation factor G (701 aa).

A tr-type G domain is found at E8 to T290. Residues A17–T24, D88–H92, and N142–D145 contribute to the GTP site.

Belongs to the TRAFAC class translation factor GTPase superfamily. Classic translation factor GTPase family. EF-G/EF-2 subfamily.

It is found in the cytoplasm. In terms of biological role, catalyzes the GTP-dependent ribosomal translocation step during translation elongation. During this step, the ribosome changes from the pre-translocational (PRE) to the post-translocational (POST) state as the newly formed A-site-bound peptidyl-tRNA and P-site-bound deacylated tRNA move to the P and E sites, respectively. Catalyzes the coordinated movement of the two tRNA molecules, the mRNA and conformational changes in the ribosome. This chain is Elongation factor G, found in Aeromonas salmonicida (strain A449).